Consider the following 389-residue polypeptide: Cellobiose 2-epimerase (389 aa).

The protein belongs to the cellobiose 2-epimerase family. In terms of assembly, monomer.

The enzyme catalyses D-cellobiose = beta-D-glucosyl-(1-&gt;4)-D-mannopyranose. Its function is as follows. Catalyzes the reversible epimerization of cellobiose to 4-O-beta-D-glucopyranosyl-D-mannose (Glc-Man). Catalyzes epimerization but also isomerization for beta-1,4- and alpha-1,4-gluco-oligosaccharides. Can use cellobiose, lactose, cellotriose, maltose and maltotriose. The polypeptide is Cellobiose 2-epimerase (Dictyoglomus turgidum (strain DSM 6724 / Z-1310)).